Consider the following 262-residue polypeptide: Hemin import ATP-binding protein HmuV (262 aa).

Positions 3-244 (LQARNLTLAR…DHMRRVYGIE (242 aa)) constitute an ABC transporter domain. 35 to 42 (GANGAGKS) provides a ligand contact to ATP.

The protein belongs to the ABC transporter superfamily. Heme (hemin) importer (TC 3.A.1.14.5) family. In terms of assembly, the complex is composed of two ATP-binding proteins (HmuV), two transmembrane proteins (HmuU) and a solute-binding protein (HmuT).

It is found in the cell inner membrane. In terms of biological role, part of the ABC transporter complex HmuTUV involved in hemin import. Responsible for energy coupling to the transport system. This is Hemin import ATP-binding protein HmuV from Bordetella bronchiseptica (strain ATCC BAA-588 / NCTC 13252 / RB50) (Alcaligenes bronchisepticus).